We begin with the raw amino-acid sequence, 377 residues long: Early estrogen-induced gene 1 protein (377 aa).

Residues 2 to 145 (AFLTKKKKFK…ILKVNIGMSL (144 aa)) enclose the C2 NT-type domain. 3 stretches are compositionally biased toward polar residues: residues 160 to 173 (KTVS…SLQM), 188 to 198 (VRQNRSRQAML), and 222 to 234 (SRNS…QSKI). The tract at residues 160 to 313 (KTVSPPGQDS…SVESQPTWVD (154 aa)) is disordered. The span at 256 to 269 (TSTSSSVSGGLSLT) shows a compositional bias: low complexity. Over residues 274 to 285 (EPERDVKPEKPP) the composition is skewed to basic and acidic residues.

This sequence belongs to the EEIG family.

The protein resides in the nucleus. It is found in the cytoplasm. Its function is as follows. May be involved in osteoclast differentiation. In Xenopus laevis (African clawed frog), this protein is Early estrogen-induced gene 1 protein (eeig1).